The sequence spans 359 residues: Phosphoribosylformylglycinamidine cyclo-ligase (359 aa).

The protein belongs to the AIR synthase family.

The protein localises to the cytoplasm. It catalyses the reaction 2-formamido-N(1)-(5-O-phospho-beta-D-ribosyl)acetamidine + ATP = 5-amino-1-(5-phospho-beta-D-ribosyl)imidazole + ADP + phosphate + H(+). It participates in purine metabolism; IMP biosynthesis via de novo pathway; 5-amino-1-(5-phospho-D-ribosyl)imidazole from N(2)-formyl-N(1)-(5-phospho-D-ribosyl)glycinamide: step 2/2. This Brucella canis (strain ATCC 23365 / NCTC 10854 / RM-666) protein is Phosphoribosylformylglycinamidine cyclo-ligase.